Here is a 261-residue protein sequence, read N- to C-terminus: Ribosomal RNA large subunit methyltransferase E (261 aa).

G81, W83, D104, D120, and D144 together coordinate S-adenosyl-L-methionine. The active-site Proton acceptor is K184. Residues 233 to 261 (GNALGHEVEDDGPMPHDPREDATADEDQD) form a disordered region. Basic and acidic residues predominate over residues 245 to 254 (PMPHDPREDA).

Belongs to the class I-like SAM-binding methyltransferase superfamily. RNA methyltransferase RlmE family.

It is found in the cytoplasm. The enzyme catalyses uridine(2552) in 23S rRNA + S-adenosyl-L-methionine = 2'-O-methyluridine(2552) in 23S rRNA + S-adenosyl-L-homocysteine + H(+). Its function is as follows. Specifically methylates the uridine in position 2552 of 23S rRNA at the 2'-O position of the ribose in the fully assembled 50S ribosomal subunit. The chain is Ribosomal RNA large subunit methyltransferase E from Allorhizobium ampelinum (strain ATCC BAA-846 / DSM 112012 / S4) (Agrobacterium vitis (strain S4)).